We begin with the raw amino-acid sequence, 371 residues long: Peptide chain release factor 2 (371 aa).

Glutamine 251 is modified (N5-methylglutamine).

The protein belongs to the prokaryotic/mitochondrial release factor family. Post-translationally, methylated by PrmC. Methylation increases the termination efficiency of RF2.

The protein localises to the cytoplasm. Its function is as follows. Peptide chain release factor 2 directs the termination of translation in response to the peptide chain termination codons UGA and UAA. The protein is Peptide chain release factor 2 of Arthrobacter sp. (strain FB24).